Reading from the N-terminus, the 284-residue chain is ELMO domain-containing protein B (284 aa).

The region spanning 124 to 276 (EHEASLERLW…EFETKISQNS (153 aa)) is the ELMO domain.

The polypeptide is ELMO domain-containing protein B (elmoB) (Dictyostelium discoideum (Social amoeba)).